Reading from the N-terminus, the 89-residue chain is Small ribosomal subunit protein uS15 (89 aa).

It belongs to the universal ribosomal protein uS15 family. In terms of assembly, part of the 30S ribosomal subunit. Forms a bridge to the 50S subunit in the 70S ribosome, contacting the 23S rRNA.

One of the primary rRNA binding proteins, it binds directly to 16S rRNA where it helps nucleate assembly of the platform of the 30S subunit by binding and bridging several RNA helices of the 16S rRNA. In terms of biological role, forms an intersubunit bridge (bridge B4) with the 23S rRNA of the 50S subunit in the ribosome. The chain is Small ribosomal subunit protein uS15 from Photorhabdus luminescens (Xenorhabdus luminescens).